The following is a 466-amino-acid chain: Argininosuccinate lyase (466 aa).

This sequence belongs to the lyase 1 family. Argininosuccinate lyase subfamily.

The protein resides in the cytoplasm. It catalyses the reaction 2-(N(omega)-L-arginino)succinate = fumarate + L-arginine. Its pathway is amino-acid biosynthesis; L-arginine biosynthesis; L-arginine from L-ornithine and carbamoyl phosphate: step 3/3. The sequence is that of Argininosuccinate lyase from Bartonella tribocorum (strain CIP 105476 / IBS 506).